A 465-amino-acid chain; its full sequence is BTB/POZ and MATH domain-containing protein 4 (465 aa).

The interval 12-40 is disordered; the sequence is LQRQNPLQKSEQQRRNFEMPSPPTTTSLS. The MATH domain occupies 46–180; sequence NGSHSFTIKG…DDCLKINCTV (135 aa). One can recognise a BTB domain in the interval 216-282; sequence SDITFNVSGE…IYKDALIEDA (67 aa). 2 disordered regions span residues 395-429 and 441-465; these read SGGG…INGG and VNAN…ELED. The span at 442 to 458 shows a compositional bias: low complexity; sequence NANGSGRNNNDNNNSDD.

This sequence belongs to the Tdpoz family. Interacts with RAP2-4. Binds to MYB56 at the promoter of FLOWERING LOCUS T (FT). In terms of tissue distribution, ubiquitous.

It localises to the cytoplasm. The protein operates within protein modification; protein ubiquitination. May act as a substrate-specific adapter of an E3 ubiquitin-protein ligase complex (CUL3-RBX1-BTB) which mediates the ubiquitination and subsequent proteasomal degradation of target proteins. The sequence is that of BTB/POZ and MATH domain-containing protein 4 (BPM4) from Arabidopsis thaliana (Mouse-ear cress).